Consider the following 407-residue polypeptide: uncharacterized protein (407 aa).

The Lumenal portion of the chain corresponds to 1–290 (MPLNIIGTAL…SNSLRRVISN (290 aa)). 3 residues coordinate NADP(+): Asp-114, Lys-236, and Ser-281. Lys-236 acts as the Lowers pKa of active site Tyr in catalysis. A helical membrane pass occupies residues 291–311 (GSVVLLIILYCILLYPILWLF). The Cytoplasmic portion of the chain corresponds to 312–407 (TKSGRRGDQS…KSQNKSRKDD (96 aa)). Positions 361–390 (ELQKKLFDNTERDILQLEKKVAAKRNANKT) form a coiled coil. A disordered region spans residues 383–407 (AKRNANKTGNQNSKKKSQNKSRKDD). Positions 395-407 (SKKKSQNKSRKDD) are enriched in basic residues.

This sequence belongs to the short-chain dehydrogenases/reductases (SDR) family.

It is found in the endoplasmic reticulum membrane. Its function is as follows. May be involved in lipid metabolism. This is an uncharacterized protein from Saccharomyces cerevisiae (strain ATCC 204508 / S288c) (Baker's yeast).